The following is a 305-amino-acid chain: Virulence plasmid integrase pGP7-D (305 aa).

The 87-residue stretch at Leu-13–Tyr-99 folds into the Core-binding (CB) domain. Positions Ile-127–Leu-305 constitute a Tyr recombinase domain. Active-site residues include Lys-188 and Arg-257. Tyr-289 serves as the catalytic O-(3'-phospho-DNA)-tyrosine intermediate.

The protein belongs to the 'phage' integrase family.

This Chlamydia trachomatis serovar L2 (strain ATCC VR-902B / DSM 19102 / 434/Bu) protein is Virulence plasmid integrase pGP7-D.